The following is a 721-amino-acid chain: Catalase-peroxidase (721 aa).

The tryptophyl-tyrosyl-methioninium (Trp-Tyr) (with M-238) cross-link spans 89–212 (WHSAGTYRTG…LAAVQMGLIY (124 aa)). The Proton acceptor role is filled by H90. Residues 212 to 238 (YVNPEGPNGDPDPFAAAVDIRETFARM) constitute a cross-link (tryptophyl-tyrosyl-methioninium (Tyr-Met) (with W-89)). Residue H253 participates in heme b binding.

This sequence belongs to the peroxidase family. Peroxidase/catalase subfamily. As to quaternary structure, homodimer or homotetramer. It depends on heme b as a cofactor. Post-translationally, formation of the three residue Trp-Tyr-Met cross-link is important for the catalase, but not the peroxidase activity of the enzyme.

The catalysed reaction is H2O2 + AH2 = A + 2 H2O. The enzyme catalyses 2 H2O2 = O2 + 2 H2O. Functionally, bifunctional enzyme with both catalase and broad-spectrum peroxidase activity. The chain is Catalase-peroxidase from Shewanella baltica (strain OS155 / ATCC BAA-1091).